The following is a 619-amino-acid chain: Chitinase C (619 aa).

Residues 1-30 (MRFRHKAAALAATLALPLAGLVGLASPAQA) form the signal peptide. Positions 31–134 (ATSATATFAK…KLNGGSCDGT (104 aa)) constitute a CBM2 domain. The region spanning 144 to 229 (APGTPTASNI…GAVKVTTTGG (86 aa)) is the Fibronectin type-III domain. Positions 212–236 (ADQTGPASGAVKVTTTGGGDGGNPG) are disordered. Residues 227–236 (TGGGDGGNPG) show a composition bias toward gly residues. The 380-residue stretch at 240 to 619 (EVKMGYFTNW…TPAVRTTRRH (380 aa)) folds into the GH18 domain. Chitin contacts are provided by residues 312–313 (DQ) and 339–342 (GGWT). Glutamate 382 (proton donor) is an active-site residue. Chitin is bound by residues tyrosine 383, 449–452 (MTYD), and tryptophan 589.

This sequence belongs to the glycosyl hydrolase 18 family. Chitinase class II subfamily.

The enzyme catalyses Random endo-hydrolysis of N-acetyl-beta-D-glucosaminide (1-&gt;4)-beta-linkages in chitin and chitodextrins.. The protein is Chitinase C (chiC) of Streptomyces lividans.